Here is a 247-residue protein sequence, read N- to C-terminus: ATP synthase subunit a (247 aa).

The next 6 helical transmembrane spans lie at 24 to 44 (IAFTNSSAYMLVAVVLTSLLM), 82 to 102 (FFPFVFTIFMLVTVSNLVGIV), 112 to 132 (IIVTAALAFLVFFTVLIYGFY), 141 to 161 (LFVPSGIPIVILPLVVAIEVI), 194 to 214 (MLGAMGIVGVFGAVLPLALVV), and 219 to 239 (LELLVAFLQAYVFTILTCIYI).

This sequence belongs to the ATPase A chain family. F-type ATPases have 2 components, CF(1) - the catalytic core - and CF(0) - the membrane proton channel. CF(1) has five subunits: alpha(3), beta(3), gamma(1), delta(1), epsilon(1). CF(0) has three main subunits: a(1), b(2) and c(9-12). The alpha and beta chains form an alternating ring which encloses part of the gamma chain. CF(1) is attached to CF(0) by a central stalk formed by the gamma and epsilon chains, while a peripheral stalk is formed by the delta and b chains.

Its subcellular location is the cell inner membrane. Key component of the proton channel; it plays a direct role in the translocation of protons across the membrane. The protein is ATP synthase subunit a of Nitrobacter hamburgensis (strain DSM 10229 / NCIMB 13809 / X14).